Here is a 598-residue protein sequence, read N- to C-terminus: Aspartate--tRNA(Asp/Asn) ligase (598 aa).

Residue Glu-177 participates in L-aspartate binding. An aspartate region spans residues 201-204; the sequence is QIFK. 2 residues coordinate L-aspartate: Arg-223 and His-451. 223–225 is a binding site for ATP; sequence RDE. Residue Glu-485 participates in ATP binding. An L-aspartate-binding site is contributed by Arg-492. 537–540 serves as a coordination point for ATP; sequence GVDR.

The protein belongs to the class-II aminoacyl-tRNA synthetase family. Type 1 subfamily. In terms of assembly, homodimer.

The protein resides in the cytoplasm. It catalyses the reaction tRNA(Asx) + L-aspartate + ATP = L-aspartyl-tRNA(Asx) + AMP + diphosphate. Its function is as follows. Aspartyl-tRNA synthetase with relaxed tRNA specificity since it is able to aspartylate not only its cognate tRNA(Asp) but also tRNA(Asn). Reaction proceeds in two steps: L-aspartate is first activated by ATP to form Asp-AMP and then transferred to the acceptor end of tRNA(Asp/Asn). In Anaplasma phagocytophilum (strain HZ), this protein is Aspartate--tRNA(Asp/Asn) ligase.